The chain runs to 224 residues: Respiratory supercomplex factor 2, mitochondrial (224 aa).

The Mitochondrial intermembrane segment spans residues 1–13 (MKILTQDEIEAHR). Residues 14–38 (SHTLKGGIEGALAGFAISAIIFKVL) form a helical membrane-spanning segment. The Mitochondrial matrix portion of the chain corresponds to 39–47 (PRRYPKFKP). Residues 48-75 (STLTWSIKTALWITPPTVLTAICAEEAS) traverse the membrane as a helical segment. At 76-103 (NNFDATMYGSGSSSEDALDEHRRWKSLS) the chain is on the mitochondrial intermembrane side. Residues 89–180 (SEDALDEHRR…YENKLHPNKQ (92 aa)) form the HIG1 domain. Residues 104–133 (TKDKFVEGLSNNKYKIITGAWAASLYGSWV) traverse the membrane as a helical segment. Topologically, residues 134-142 (IVNKDPIMT) are mitochondrial matrix. The helical transmembrane segment at 143–173 (KAQKIVQARMYAQFITVGLLLASVGLSMYEN) threads the bilayer. The Mitochondrial intermembrane segment spans residues 174 to 184 (KLHPNKQKVNE). The helical transmembrane segment at 185–204 (MRRWENALRVAEEEERLEKE) threads the bilayer. The Mitochondrial matrix portion of the chain corresponds to 205 to 224 (GRRTGYVSNEERINSKIFKS).

As to quaternary structure, associates with a subpopulation of the cytochrome bc1-cytochrome c oxidase supercomplexes. Associates in substoichiometric amounts with complex IV. Interacts with COX3.

It localises to the mitochondrion membrane. Functionally, assembly factor that plays a role in the assembly of the respiratory chain supercomplexes (SCs) composed of ubiquinol-cytochrome c oxidoreductase (cytochrome b-c1 complex, complex III, CIII) and cytochrome c oxidase (complex IV, CIV). May be required for late-stage assembly of the COX12 and COX13 subunits. Required for the generation and maintenance of a normal proton motive force (PMF) across the inner mitochondrial membrane (IMM) by preventing proton leakage through an inactive population of CIV that accumulates when RCF1 and/or RCF2 proteins are absent. The sequence is that of Respiratory supercomplex factor 2, mitochondrial (RCF2) from Saccharomyces cerevisiae (strain ATCC 204508 / S288c) (Baker's yeast).